The sequence spans 568 residues: CDK5 and ABL1 enzyme substrate 1 (568 aa).

Low complexity predominate over residues 1–31 (MAAATATAGTAACSSSSSSRGGSTDAAATSG). Disordered regions lie at residues 1 to 94 (MAAA…PGAR) and 130 to 169 (PSLV…QEEL). An interaction with TDRD7 region spans residues 1–98 (MAAATATAGT…TKPGARARLS (98 aa)). Pro residues predominate over residues 33–45 (QPPPPPPATAPPE). A compositionally biased stretch (basic and acidic residues) spans 46–56 (PLRKPRMDPRR). The segment at 140 to 427 (PSQPPRSAPA…TTVIDYVKPS (288 aa)) is interaction with CDK3. At S248 the chain carries Phosphoserine. S274 carries the phosphoserine; by CDK2 and CDK3 modification. T350 is subject to Phosphothreonine.

It belongs to the cyclin family. As to quaternary structure, found in a complex with p53/TP53. Found in a number of complexes with CDK2, CDK3, CDK5, ABL1, TDRD7, CDK17, CCNA1, CCNE1 and TP73. Interacts with CDK2, CDK3, CDK5, ABL1 and TDRD7. Phosphorylated on Ser-274 by CCNE1/CDK3. Phosphorylated on serine/threonine residues by CDK5 and on tyrosine residues by ABL1. Also phosphorylated in vitro by CCNA1/CDK2, CCNE1/CDK2, CCNA1/CDK3 and CCNE1/CDK3. In terms of tissue distribution, ubiquitous. Expressed in postnatal day 1 (P1), in postmitotic neurons of the subplate, cortex (V/VI) and marginal zone; in postnatal day 7 (P7), in all layers of the cerebral cortex and in the CA1 and CA2 regions of the hippocampus (at protein level). Highly expressed in brain, kidney, liver and lung.

The protein resides in the nucleus. Its subcellular location is the cytoplasm. The protein localises to the cell projection. It is found in the growth cone. Cyclin-dependent kinase binding protein. Enhances cyclin-dependent kinase tyrosine phosphorylation by nonreceptor tyrosine kinases, such as that of CDK5 by activated ABL1, which leads to increased CDK5 activity and is critical for neuronal development, and that of CDK2 by WEE1, which leads to decreased CDK2 activity and growth inhibition. Positively affects neuronal outgrowth. Plays a role as a regulator for p53/p73-induced cell death. This is CDK5 and ABL1 enzyme substrate 1 (Cables1) from Mus musculus (Mouse).